A 404-amino-acid polypeptide reads, in one-letter code: Pectate lyase E (404 aa).

An N-terminal signal peptide occupies residues 1–41 (MNNSRMSSVSTQKTTGRSALGTKSALAAIIATTMMVSVASA). Asp182 and Asp225 together coordinate Ca(2+). Residue Arg278 is part of the active site.

This sequence belongs to the polysaccharide lyase 1 family. PLBC subfamily. The cofactor is Ca(2+).

It localises to the secreted. It catalyses the reaction Eliminative cleavage of (1-&gt;4)-alpha-D-galacturonan to give oligosaccharides with 4-deoxy-alpha-D-galact-4-enuronosyl groups at their non-reducing ends.. It functions in the pathway glycan metabolism; pectin degradation; 2-dehydro-3-deoxy-D-gluconate from pectin: step 2/5. Involved in maceration and soft-rotting of plant tissue. Pectate lyases have been implicated as pathogenicity factors which induce maceration or rotting of plant tissue. PelE is sufficient to induce these effects under laboratory conditions. The chain is Pectate lyase E (pelE) from Dickeya chrysanthemi (Pectobacterium chrysanthemi).